A 290-amino-acid chain; its full sequence is Elongation factor Ts (290 aa).

The segment at 82 to 85 (TDFV) is involved in Mg(2+) ion dislocation from EF-Tu.

The protein belongs to the EF-Ts family.

Its subcellular location is the cytoplasm. Its function is as follows. Associates with the EF-Tu.GDP complex and induces the exchange of GDP to GTP. It remains bound to the aminoacyl-tRNA.EF-Tu.GTP complex up to the GTP hydrolysis stage on the ribosome. This is Elongation factor Ts from Cellvibrio japonicus (strain Ueda107) (Pseudomonas fluorescens subsp. cellulosa).